The sequence spans 243 residues: Sec-independent protein translocase protein TatC (243 aa).

7 helical membrane-spanning segments follow: residues 18-38 (VIII…NYVD), 70-90 (IAII…IWSF), 106-126 (MIPV…FTVF), 132-152 (FLLQ…KYIS), 153-173 (FALN…VVYI), 191-211 (YALL…DVIS), and 213-233 (LLMA…AKFI).

The protein belongs to the TatC family. In terms of assembly, forms a complex with TatA.

It localises to the cell membrane. Its function is as follows. Part of the twin-arginine translocation (Tat) system that transports large folded proteins containing a characteristic twin-arginine motif in their signal peptide across membranes. In Carboxydothermus hydrogenoformans (strain ATCC BAA-161 / DSM 6008 / Z-2901), this protein is Sec-independent protein translocase protein TatC.